We begin with the raw amino-acid sequence, 165 residues long: uncharacterized protein (165 aa).

The chain crosses the membrane as a helical span at residues 20–40; that stretch reads INLIASIVLWLLFVITVIGTF. The N-linked (GlcNAc...) asparagine; by host glycan is linked to N51. Residues 97–117 form a helical membrane-spanning segment; that stretch reads VGIIVILIFMLMIIMNGFYQM.

It is found in the membrane. This is an uncharacterized protein from Acanthamoeba polyphaga (Amoeba).